The chain runs to 542 residues: CTP synthase (542 aa).

An amidoligase domain region spans residues 1-265; the sequence is MARYVFITGG…DDEVLAAFGI (265 aa). Ser-13 is a CTP binding site. Position 13 (Ser-13) interacts with UTP. ATP-binding positions include 14–19 and Asp-71; that span reads SLGKGI. Mg(2+) contacts are provided by Asp-71 and Glu-139. CTP is bound by residues 146–148, 186–191, and Lys-222; these read DIE and KTKPTQ. Residues 186–191 and Lys-222 each bind UTP; that span reads KTKPTQ. The Glutamine amidotransferase type-1 domain occupies 291–541; that stretch reads TIAIVGKYTG…IEAATEQSRL (251 aa). Residue Gly-353 participates in L-glutamine binding. Cys-380 serves as the catalytic Nucleophile; for glutamine hydrolysis. L-glutamine-binding positions include 381 to 384, Glu-404, and Arg-469; that span reads FGMQ. Active-site residues include His-514 and Glu-516.

It belongs to the CTP synthase family. As to quaternary structure, homotetramer.

The enzyme catalyses UTP + L-glutamine + ATP + H2O = CTP + L-glutamate + ADP + phosphate + 2 H(+). The catalysed reaction is L-glutamine + H2O = L-glutamate + NH4(+). It catalyses the reaction UTP + NH4(+) + ATP = CTP + ADP + phosphate + 2 H(+). The protein operates within pyrimidine metabolism; CTP biosynthesis via de novo pathway; CTP from UDP: step 2/2. Its activity is regulated as follows. Allosterically activated by GTP, when glutamine is the substrate; GTP has no effect on the reaction when ammonia is the substrate. The allosteric effector GTP functions by stabilizing the protein conformation that binds the tetrahedral intermediate(s) formed during glutamine hydrolysis. Inhibited by the product CTP, via allosteric rather than competitive inhibition. Its function is as follows. Catalyzes the ATP-dependent amination of UTP to CTP with either L-glutamine or ammonia as the source of nitrogen. Regulates intracellular CTP levels through interactions with the four ribonucleotide triphosphates. The chain is CTP synthase from Rhizobium etli (strain ATCC 51251 / DSM 11541 / JCM 21823 / NBRC 15573 / CFN 42).